The primary structure comprises 400 residues: Elongation factor Tu (400 aa).

The tr-type G domain maps to 10–210 (KPHCNVGTIG…VDTYIPIPPR (201 aa)). The tract at residues 19-26 (GHVDHGKT) is G1. 19-26 (GHVDHGKT) contacts GTP. Threonine 26 contacts Mg(2+). The segment at 60-64 (GLTIA) is G2. Residues 81–84 (DCPG) are G3. GTP-binding positions include 81 to 85 (DCPGH) and 136 to 139 (NKCD). The interval 136–139 (NKCD) is G4. The interval 174–176 (SAI) is G5.

Belongs to the TRAFAC class translation factor GTPase superfamily. Classic translation factor GTPase family. EF-Tu/EF-1A subfamily. As to quaternary structure, monomer.

It is found in the cytoplasm. It carries out the reaction GTP + H2O = GDP + phosphate + H(+). GTP hydrolase that promotes the GTP-dependent binding of aminoacyl-tRNA to the A-site of ribosomes during protein biosynthesis. This Dehalococcoides mccartyi (strain CBDB1) protein is Elongation factor Tu.